A 315-amino-acid polypeptide reads, in one-letter code: tRNA dimethylallyltransferase (315 aa).

10–17 (GPTEVGKT) is an ATP binding site. Residue 12 to 17 (TEVGKT) coordinates substrate. The tract at residues 35–38 (DSMQ) is interaction with substrate tRNA.

The protein belongs to the IPP transferase family. In terms of assembly, monomer. Requires Mg(2+) as cofactor.

It catalyses the reaction adenosine(37) in tRNA + dimethylallyl diphosphate = N(6)-dimethylallyladenosine(37) in tRNA + diphosphate. Its function is as follows. Catalyzes the transfer of a dimethylallyl group onto the adenine at position 37 in tRNAs that read codons beginning with uridine, leading to the formation of N6-(dimethylallyl)adenosine (i(6)A). The protein is tRNA dimethylallyltransferase of Geobacillus thermodenitrificans (strain NG80-2).